A 562-amino-acid polypeptide reads, in one-letter code: F-box and WD repeat domain-containing 11-A (562 aa).

The segment at 87–136 (GSFDKEKDLCIQLFDQWSESDQVEFVEHLIARMCHYQHGHINSYLKPMLQ) is homodimerization domain D. One can recognise an F-box domain in the interval 149–187 (DHIAENILSFLDARSLCSAELVCREWQRVISDGMLWKKL). 7 WD repeats span residues 256-295 (RSEN…CLKV), 296-335 (LTGH…VLNT), 336-375 (LIHH…DISL), 379-418 (LVGH…FVRT), 419-458 (LNGH…CLRV), 459-491 (LEGH…WDLQ), and 508-538 (LVEH…LIWD).

In terms of assembly, self-associates. Component of the SCF(FBXW11) complex.

The protein localises to the cytoplasm. It is found in the nucleus. The protein operates within protein modification; protein ubiquitination. In terms of biological role, substrate recognition component of a SCF (SKP1-CUL1-F-box protein) E3 ubiquitin-protein ligase complex which mediates the ubiquitination and subsequent proteasomal degradation of target proteins. Probably recognizes and binds to phosphorylated target proteins: the interaction with substrates requires the phosphorylation of the two serine residues in the substrates' destruction motif D-S-G-X(2,3,4)-S. SCF(FBXW11) mediates the ubiquitination of phosphorylated CTNNB1 and participates in Wnt signaling regulation. Participates in Wnt signaling regulation, and plays a role in eye and jaw development. SCF(FBXW11) plays a key role in NF-kappa-B activation by mediating ubiquitination of phosphorylated NFKBIA, leading to its degradation by the proteasome, thereby allowing the associated NF-kappa-B complex to translocate into the nucleus and to activate transcription. The protein is F-box and WD repeat domain-containing 11-A of Danio rerio (Zebrafish).